Consider the following 353-residue polypeptide: Quinolinate synthase (353 aa).

2 residues coordinate iminosuccinate: His47 and Ser68. Cys113 contributes to the [4Fe-4S] cluster binding site. Residues 139 to 141 (YAN) and Ser156 contribute to the iminosuccinate site. Cys200 contacts [4Fe-4S] cluster. Residues 226–228 (HPE) and Thr243 contribute to the iminosuccinate site. Cys297 lines the [4Fe-4S] cluster pocket.

This sequence belongs to the quinolinate synthase family. Type 1 subfamily. The cofactor is [4Fe-4S] cluster.

It is found in the cytoplasm. It catalyses the reaction iminosuccinate + dihydroxyacetone phosphate = quinolinate + phosphate + 2 H2O + H(+). The protein operates within cofactor biosynthesis; NAD(+) biosynthesis; quinolinate from iminoaspartate: step 1/1. Catalyzes the condensation of iminoaspartate with dihydroxyacetone phosphate to form quinolinate. The chain is Quinolinate synthase from Erwinia tasmaniensis (strain DSM 17950 / CFBP 7177 / CIP 109463 / NCPPB 4357 / Et1/99).